A 694-amino-acid polypeptide reads, in one-letter code: Elongation factor G (694 aa).

Residues 8–287 (EDYRNFGIMA…AVVEFLPAPT (280 aa)) enclose the tr-type G domain. GTP is bound by residues 17–24 (AHIDAGKT), 86–90 (DTPGH), and 140–143 (NKMD).

It belongs to the TRAFAC class translation factor GTPase superfamily. Classic translation factor GTPase family. EF-G/EF-2 subfamily.

It localises to the cytoplasm. In terms of biological role, catalyzes the GTP-dependent ribosomal translocation step during translation elongation. During this step, the ribosome changes from the pre-translocational (PRE) to the post-translocational (POST) state as the newly formed A-site-bound peptidyl-tRNA and P-site-bound deacylated tRNA move to the P and E sites, respectively. Catalyzes the coordinated movement of the two tRNA molecules, the mRNA and conformational changes in the ribosome. This Brucella melitensis biotype 2 (strain ATCC 23457) protein is Elongation factor G.